The primary structure comprises 499 residues: Endosomal/lysosomal proton channel TMEM175 (499 aa).

Residues M1–A10 are compositionally biased toward polar residues. Positions M1 to G26 are disordered. The Cytoplasmic portion of the chain corresponds to M1 to S30. The chain crosses the membrane as a helical span at residues H31–T53. A RxxxFSD motif 1 motif is present at residues R32–D38. The Lumenal portion of the chain corresponds to H54–R74. A short helix H1-1 region spans residues T55–E60. Positions Q62–Q68 are short helix H2-1. Residues I75–Q97 traverse the membrane as a helical segment. Topologically, residues V98–D103 are cytoplasmic. The helical transmembrane segment at D104 to S125 threads the bilayer. Over L126–L135 the chain is Lumenal. A helical transmembrane segment spans residues G136 to Y157. Residues A158–H181 are Cytoplasmic-facing. Residues I182–F202 form a helical membrane-spanning segment. The Lumenal segment spans residues F203–S207. A helical transmembrane segment spans residues Y208 to C227. At K228 to S254 the chain is on the cytoplasmic side. The helical transmembrane segment at K255–E279 threads the bilayer. A RxxxFSD motif 2 motif is present at residues R257 to D263. Topologically, residues D280–Q306 are lumenal. The interval P285–S293 is short helix H1-2. The short helix H2-2 stretch occupies residues S295–G301. Residues F307–L329 form a helical membrane-spanning segment. At H330–T335 the chain is on the cytoplasmic side. The chain crosses the membrane as a helical span at residues Q336 to Q357. Residues Q358–R372 are Lumenal-facing. The helical transmembrane segment at V373–T393 threads the bilayer. Residues A394–H413 lie on the Cytoplasmic side of the membrane. The helical transmembrane segment at A414–L437 threads the bilayer. The Lumenal segment spans residues S438–R439. A helical membrane pass occupies residues F440 to A466. Residues L467–C499 lie on the Cytoplasmic side of the membrane.

Belongs to the TMEM175 family. As to quaternary structure, homodimer. Interacts with AKT (AKT1, AKT2 or AKT3); leading to formation of the lysoK(GF) complex, which activates the channel. Interacts with LAMP1; inhibiting the proton channel activity of TMEM175. Interacts with LAMP2; inhibiting the proton channel activity of TMEM175.

The protein resides in the endosome membrane. The protein localises to the lysosome membrane. It carries out the reaction H(+)(in) = H(+)(out). It catalyses the reaction K(+)(in) = K(+)(out). Its activity is regulated as follows. Active at low pH (under pH 4.6): proton channel activity is activated by luminal side protons. Polyunsaturated fatty acids, such as arachidonic acid, also activate the channel activity. Proton channel activity is directly inhibited by LAMP1 or LAMP2, facilitating lysosomal acidification. Channel activity is activated following interaction with AKT (AKT1, AKT2 or AKT3): interaction promotes activation from closed to an open state. Activation by AKT is independent of AKT serine/threonine-protein kinase activity. Proton-activated proton channel that catalyzes proton efflux from endosomes and lysosomes to maintain a steady-state pH. Activated at low pH (under pH 4.6) by luminal side protons: selectively mediates lysosomal proton release from lysosomes, eliciting a proton leak that balances V-ATPase activity to maintain pH homeostasis. Regulation of lumenal pH stability is required for autophagosome-lysosome fusion. Also acts as a potassium channel at higher pH, regulating potassium conductance in endosomes and lysosomes. Constitutes the pore-forming subunit of the lysoK(GF) complex, a complex activated by extracellular growth factors. The lysoK(GF) complex is composed of TMEM175 and AKT (AKT1, AKT2 or AKT3), a major target of growth factor receptors: in the complex, TMEM175 channel is opened by conformational changes by AKT, leading to its activation. The lysoK(GF) complex is required to protect neurons against stress-induced damage. This is Endosomal/lysosomal proton channel TMEM175 from Rattus norvegicus (Rat).